Consider the following 226-residue polypeptide: NADH-ubiquinone oxidoreductase chain 6 (226 aa).

The next 6 membrane-spanning stretches (helical) occupy residues 1–21 (MNNF…ILVI), 27–47 (VISV…LVLL), 52–72 (IGIS…LFVI), 94–114 (PLAT…VPSF), 126–146 (IFKF…LGVG), and 185–205 (ALWL…PITL).

The protein belongs to the complex I subunit 6 family.

Its subcellular location is the mitochondrion inner membrane. The enzyme catalyses a ubiquinone + NADH + 5 H(+)(in) = a ubiquinol + NAD(+) + 4 H(+)(out). Functionally, core subunit of the mitochondrial membrane respiratory chain NADH dehydrogenase (Complex I) that is believed to belong to the minimal assembly required for catalysis. Complex I functions in the transfer of electrons from NADH to the respiratory chain. The immediate electron acceptor for the enzyme is believed to be ubiquinone. This chain is NADH-ubiquinone oxidoreductase chain 6 (ND6), found in Mycosarcoma maydis (Corn smut fungus).